The following is a 1149-amino-acid chain: Structural maintenance of chromosomes protein 6 homolog smc-6 (1149 aa).

77–84 (GPNGSGKS) is a binding site for ATP. A coiled-coil region spans residues 309 to 460 (LQDETKKEYA…EEEKYTIQRD (152 aa)). Residues 461–687 (INQLRRKIEQ…DVDEGALARL (227 aa)) are flexible hinge. Residues 714–920 (YNERDQTKAA…AVDRATVGCD (207 aa)) are a coiled coil. Disordered regions lie at residues 875 to 900 (NDKKNHPMPPGETDPPDLSSFPSTTE) and 1026 to 1060 (EVDEHSYDDDSDDSTGPRRKKSKKSGQKKKRVRDL). Acidic residues predominate over residues 1026 to 1038 (EVDEHSYDDDSDD). Over residues 1042–1058 (PRRKKSKKSGQKKKRVR) the composition is skewed to basic residues.

This sequence belongs to the SMC family. SMC6 subfamily. Interacts with smc-5. As to expression, expressed in the germline (at protein level).

Its subcellular location is the nucleus. The protein localises to the chromosome. Core component of the smc-5/smc-6 complex. Involved in DNA double-strand break repair by promoting sister-chromatid homologous recombination during meiosis. Also plays a role in the DNA damage repair of ultraviolet (UV) radiation-induced DNA lesions. Promotes efficient DNA replication. The chain is Structural maintenance of chromosomes protein 6 homolog smc-6 from Caenorhabditis elegans.